The primary structure comprises 729 residues: Fatty acid oxidation complex subunit alpha (729 aa).

The interval 1–189 (MLYKGDTLYL…KIGLVDGVVK (189 aa)) is enoyl-CoA hydratase/isomerase. Position 296 (D296) interacts with substrate. The 3-hydroxyacyl-CoA dehydrogenase stretch occupies residues 311–729 (ETPKQAAVLG…ARPVGSLKTA (419 aa)). NAD(+) contacts are provided by residues M324, D343, 400–402 (VVE), K407, and S429. H450 serves as the catalytic For 3-hydroxyacyl-CoA dehydrogenase activity. Position 453 (N453) interacts with NAD(+). Substrate is bound by residues N500 and Y660. The tract at residues 708–729 (RHNEPYYPPVEPARPVGSLKTA) is disordered.

The protein in the N-terminal section; belongs to the enoyl-CoA hydratase/isomerase family. It in the C-terminal section; belongs to the 3-hydroxyacyl-CoA dehydrogenase family. Heterotetramer of two alpha chains (FadB) and two beta chains (FadA).

The enzyme catalyses a (3S)-3-hydroxyacyl-CoA + NAD(+) = a 3-oxoacyl-CoA + NADH + H(+). It carries out the reaction a (3S)-3-hydroxyacyl-CoA = a (2E)-enoyl-CoA + H2O. The catalysed reaction is a 4-saturated-(3S)-3-hydroxyacyl-CoA = a (3E)-enoyl-CoA + H2O. It catalyses the reaction (3S)-3-hydroxybutanoyl-CoA = (3R)-3-hydroxybutanoyl-CoA. The enzyme catalyses a (3Z)-enoyl-CoA = a 4-saturated (2E)-enoyl-CoA. It carries out the reaction a (3E)-enoyl-CoA = a 4-saturated (2E)-enoyl-CoA. It participates in lipid metabolism; fatty acid beta-oxidation. Involved in the aerobic and anaerobic degradation of long-chain fatty acids via beta-oxidation cycle. Catalyzes the formation of 3-oxoacyl-CoA from enoyl-CoA via L-3-hydroxyacyl-CoA. It can also use D-3-hydroxyacyl-CoA and cis-3-enoyl-CoA as substrate. In Salmonella newport (strain SL254), this protein is Fatty acid oxidation complex subunit alpha.